The following is a 461-amino-acid chain: Fumarate hydratase class II (461 aa).

Residues 97-99, 127-130, 137-139, and Thr-185 contribute to the substrate site; these read SGT, HPND, and SSN. Residue His-186 is the Proton donor/acceptor of the active site. Ser-316 is a catalytic residue. Residues Ser-317 and 322–324 each bind substrate; that span reads KVN.

It belongs to the class-II fumarase/aspartase family. Fumarase subfamily. In terms of assembly, homotetramer.

The protein resides in the cytoplasm. The enzyme catalyses (S)-malate = fumarate + H2O. It participates in carbohydrate metabolism; tricarboxylic acid cycle; (S)-malate from fumarate: step 1/1. Its function is as follows. Involved in the TCA cycle. Catalyzes the stereospecific interconversion of fumarate to L-malate. The sequence is that of Fumarate hydratase class II from Oceanobacillus iheyensis (strain DSM 14371 / CIP 107618 / JCM 11309 / KCTC 3954 / HTE831).